Here is a 201-residue protein sequence, read N- to C-terminus: Large ribosomal subunit protein uL4 (201 aa).

The tract at residues 43-71 (TRAQKTRSEVSGGGKKPWAQKGTGRARAG) is disordered.

It belongs to the universal ribosomal protein uL4 family. As to quaternary structure, part of the 50S ribosomal subunit.

In terms of biological role, one of the primary rRNA binding proteins, this protein initially binds near the 5'-end of the 23S rRNA. It is important during the early stages of 50S assembly. It makes multiple contacts with different domains of the 23S rRNA in the assembled 50S subunit and ribosome. Its function is as follows. Forms part of the polypeptide exit tunnel. The protein is Large ribosomal subunit protein uL4 of Pseudoalteromonas translucida (strain TAC 125).